A 427-amino-acid polypeptide reads, in one-letter code: Endothelin-1 receptor (427 aa).

A signal peptide spans 1-20 (METFWLRVSFWVALVGGVIS). Residues 21–80 (DNPESYSTNLSIHVDSVTTFRGTELSFVVTTHQPTNLALPSNGSMHNYCPQQTKITSAFK) are Extracellular-facing. 2 N-linked (GlcNAc...) asparagine glycosylation sites follow: Asn-29 and Asn-62. Residues 81–102 (YINTVISCTIFIVGMVGNATLL) form a helical membrane-spanning segment. Over 103-112 (RIIYQNKCMR) the chain is Cytoplasmic. The helical transmembrane segment at 113–132 (NGPNALIASLALGDLIYVVI) threads the bilayer. Topologically, residues 133–159 (DLPINVFKLLAGRWPFEQNDFGVFLCK) are extracellular. The cysteines at positions 158 and 239 are disulfide-linked. Residues 160–181 (LFPFLQKSSVGITVLNLCALSV) form a helical membrane-spanning segment. The Cytoplasmic segment spans residues 182–205 (DRYRAVASWSRVQGIGIPLVTAIE). A helical membrane pass occupies residues 206–229 (IVSIWILSFILAIPEAIGFVMVPF). The Extracellular portion of the chain corresponds to 230–256 (EYKGAQHRTCMLNATSKFMEFYQDVKD). Residues 257–278 (WWLFGFYFCMPLVCTAIFYTLM) form a helical membrane-spanning segment. At 279–306 (TCEMLNRRNGSLRIALSEHLKQRREVAK) the chain is on the cytoplasmic side. A helical transmembrane segment spans residues 307 to 328 (TVFCLVVIFALCWFPLHLSRIL). The Extracellular segment spans residues 329-347 (KKTVYDEMDTNRCELLSFL). A helical transmembrane segment spans residues 348 to 372 (LLMDYIGINLATMNSCINPIALYFV). Residues 373-427 (SKKFKNCFQSCLCCCCYQSKSLMTSVPMNGTSIQWKNPEQNNHNTERSSHKDSIN) are Cytoplasmic-facing. Over residues 405-415 (IQWKNPEQNNH) the composition is skewed to polar residues. The disordered stretch occupies residues 405–427 (IQWKNPEQNNHNTERSSHKDSIN). The segment covering 416–427 (NTERSSHKDSIN) has biased composition (basic and acidic residues). Residue Ser-425 is modified to Phosphoserine.

The protein belongs to the G-protein coupled receptor 1 family. Endothelin receptor subfamily. EDNRA sub-subfamily. As to quaternary structure, interacts with HDAC7 and KAT5.

The protein localises to the cell membrane. Its function is as follows. Receptor for endothelin-1. Mediates its action by association with G proteins that activate a phosphatidylinositol-calcium second messenger system. The rank order of binding affinities for ET-A is: ET1 &gt; ET2 &gt;&gt; ET3. In Ovis aries (Sheep), this protein is Endothelin-1 receptor.